The chain runs to 127 residues: MIELDYLTIAFGGAIGAVLRYLVSRTINSLLPFSYIPLGTIIVNSVGSFFLSFLMFAAIEKVPLSKEAILFFGTGLLGAFTTFSTFTYETLSLIEESPARGVAYALANLLFAFTCAYFGMILGRGKV.

The next 4 helical transmembrane spans lie at 4 to 24 (LDYL…YLVS), 39 to 59 (GTII…FAAI), 68 to 88 (AILF…TFTY), and 102 to 122 (VAYA…GMIL). Na(+) is bound by residues Gly78 and Thr81.

It belongs to the fluoride channel Fluc/FEX (TC 1.A.43) family.

It localises to the cell inner membrane. It carries out the reaction fluoride(in) = fluoride(out). With respect to regulation, na(+) is not transported, but it plays an essential structural role and its presence is essential for fluoride channel function. In terms of biological role, fluoride-specific ion channel. Important for reducing fluoride concentration in the cell, thus reducing its toxicity. In Thermotoga maritima (strain ATCC 43589 / DSM 3109 / JCM 10099 / NBRC 100826 / MSB8), this protein is Fluoride-specific ion channel FluC.